Reading from the N-terminus, the 231-residue chain is Killer cell lectin-like receptor subfamily F member 1 (231 aa).

Over 1 to 38 the chain is Cytoplasmic; sequence MQDEERYMTLNVQSKKRSSAQTSQLTFKDYSVTLHWYK. Phosphotyrosine is present on Y7. The helical; Signal-anchor for type II membrane protein transmembrane segment at 39–59 threads the bilayer; the sequence is ILLGISGTVNGILTLTLISLI. The Extracellular segment spans residues 60–231; that stretch reads LLVSQGVLLK…SSVFKWICQY (172 aa). 4 N-linked (GlcNAc...) asparagine glycosylation sites follow: N77, N91, N96, and N176. Residues 121–230 enclose the C-type lectin domain; it reads YQGKCYWFSN…CSSVFKWICQ (110 aa). Disulfide bonds link C142-C229 and C208-C221.

As to quaternary structure, homodimer. Interacts with CLEC2B. Phosphorylated on Tyr-7; this phosphorylation is required for NKp80/KLRF1-mediated cytotoxicity. In terms of tissue distribution, strongly expressed in peripheral blood leukocytes and spleen, with weaker expression in lymph node and adult liver, and no expression detected in bone marrow, thymus, and fetal liver. Not expressed in brain, heart, placenta, lung, kidney, skeletal muscle, and pancreas. Within peripheral blood leukocyte and immunocyte cell lines, expression was predominant in NK cells but was also detected in monocytes.

It localises to the membrane. Functions as an activating receptor involved in immunosurveillance upon binding to various ligands displayed at the surface of myeloid cells. Upon interaction with CLEC2B ligand, stimulates NK-cell cytotoxicity and cytokine production leading to the cytolysis of malignant CLEC2B-expressing myeloid cells. Actviation of the common cytotoxicity pathway involves SRC and SYK kinases. The polypeptide is Killer cell lectin-like receptor subfamily F member 1 (KLRF1) (Homo sapiens (Human)).